Consider the following 156-residue polypeptide: MSNNALDRLINKQKPKVPPRNDVVSESVSNDIKTQGQQELNTSLPPSDTKATPEEMPTSHESETSLSQDQKPKLSPDTFETVRNTIRIESEVDESLRQLCHEERITKETWLEAAYLYLCEKPEELAQVIQLAQERLSQRKAIADYKRAKTMQERFL.

The tract at residues 1–55 is required for interaction with McdA:DNA complex; sequence MSNNALDRLINKQKPKVPPRNDVVSESVSNDIKTQGQQELNTSLPPSDTKATPEE. Residues 1-79 form a disordered region; that stretch reads MSNNALDRLI…QKPKLSPDTF (79 aa). A compositionally biased stretch (polar residues) spans 24–50; it reads VSESVSNDIKTQGQQELNTSLPPSDTK. A compositionally biased stretch (basic and acidic residues) spans 51-63; sequence ATPEEMPTSHESE. Residues 122 to 156 adopt a coiled-coil conformation; sequence PEELAQVIQLAQERLSQRKAIADYKRAKTMQERFL.

Homodimerizes; may exist in higher order oligomers in solution. Forms a complex with McdA:DNA. Homohexamerizes, interacts with shell components of the carboxysome.

The protein localises to the carboxysome. Functionally, mcdA and McdB together mediate carboxysome (Cb) spacing, size, ultrastructure and probably inheritance in the cell, together they prevent Cb aggregation. McdA is an ATPase that forms dynamic gradients on the nucleoid in response to adapter protein McdB, which associates with carboxysomes. The interplay between McdA gradients on the nucleoid and McdB-bound carboxysomes result in the equal spacing of Cbs along the cell length. Stimulates the ATPase activity of McdA, causing McdA to be released from DNA. Undergoes liquid-liquid phase separation. Incorrect positioning (aggregation) of carboxysomes results in reduced CO(2) fixation by encapsulated ribulose-1,5-bisphosphate carboxylase (RuBisCO, cbbL/cbbS), which leads to slower growth. This Gloeothece citriformis (strain PCC 7424) (Cyanothece sp. (strain PCC 7424)) protein is Maintenance of carboxysome distribution protein B.